Consider the following 132-residue polypeptide: Large ribosomal subunit protein uL22 (132 aa).

It belongs to the universal ribosomal protein uL22 family. Part of the 50S ribosomal subunit.

Its function is as follows. This protein binds specifically to 23S rRNA; its binding is stimulated by other ribosomal proteins, e.g. L4, L17, and L20. It is important during the early stages of 50S assembly. It makes multiple contacts with different domains of the 23S rRNA in the assembled 50S subunit and ribosome. In terms of biological role, the globular domain of the protein is located near the polypeptide exit tunnel on the outside of the subunit, while an extended beta-hairpin is found that lines the wall of the exit tunnel in the center of the 70S ribosome. The chain is Large ribosomal subunit protein uL22 from Rhodospirillum centenum (strain ATCC 51521 / SW).